The primary structure comprises 102 residues: MQKARIRLSGTDFEKIEMVCDRIKEIAERTGVNLAGPIPLPTKKLVVPTRKSPDGEGTATWDRWQMRVHKRLIDIDADERALRQLMRIQVPKDIGIEIVLES.

It belongs to the universal ribosomal protein uS10 family. Part of the 30S ribosomal subunit.

Involved in the binding of tRNA to the ribosomes. The sequence is that of Small ribosomal subunit protein uS10 from Methanoculleus marisnigri (strain ATCC 35101 / DSM 1498 / JR1).